The following is a 61-amino-acid chain: Small ribosomal subunit protein uS14 (61 aa).

Zn(2+)-binding residues include cysteine 24, cysteine 27, cysteine 40, and cysteine 43.

This sequence belongs to the universal ribosomal protein uS14 family. Zinc-binding uS14 subfamily. In terms of assembly, part of the 30S ribosomal subunit. Contacts proteins S3 and S10. Zn(2+) is required as a cofactor.

In terms of biological role, binds 16S rRNA, required for the assembly of 30S particles and may also be responsible for determining the conformation of the 16S rRNA at the A site. This is Small ribosomal subunit protein uS14 from Geobacillus stearothermophilus (Bacillus stearothermophilus).